A 257-amino-acid chain; its full sequence is 3-methyl-2-oxobutanoate hydroxymethyltransferase (257 aa).

Positions 42 and 81 each coordinate Mg(2+). 3-methyl-2-oxobutanoate contacts are provided by residues 42–43 (DS), Asp-81, and Lys-110. Glu-112 contributes to the Mg(2+) binding site. Glu-176 serves as the catalytic Proton acceptor.

It belongs to the PanB family. As to quaternary structure, homodecamer; pentamer of dimers. The cofactor is Mg(2+).

The protein localises to the cytoplasm. It carries out the reaction 3-methyl-2-oxobutanoate + (6R)-5,10-methylene-5,6,7,8-tetrahydrofolate + H2O = 2-dehydropantoate + (6S)-5,6,7,8-tetrahydrofolate. It participates in cofactor biosynthesis; (R)-pantothenate biosynthesis; (R)-pantoate from 3-methyl-2-oxobutanoate: step 1/2. Functionally, catalyzes the reversible reaction in which hydroxymethyl group from 5,10-methylenetetrahydrofolate is transferred onto alpha-ketoisovalerate to form ketopantoate. In Pelagibacter ubique (strain HTCC1062), this protein is 3-methyl-2-oxobutanoate hydroxymethyltransferase.